We begin with the raw amino-acid sequence, 108 residues long: Small ribosomal subunit protein uS17 (108 aa).

It belongs to the universal ribosomal protein uS17 family. As to quaternary structure, part of the 30S ribosomal subunit.

Its function is as follows. One of the primary rRNA binding proteins, it binds specifically to the 5'-end of 16S ribosomal RNA. This chain is Small ribosomal subunit protein uS17, found in Methanoculleus marisnigri (strain ATCC 35101 / DSM 1498 / JR1).